Consider the following 278-residue polypeptide: NAD-capped RNA hydrolase NudC (278 aa).

Residue arginine 84 participates in substrate binding. Residues cysteine 114 and cysteine 117 each contribute to the Zn(2+) site. Glutamate 127 contributes to the substrate binding site. The Zn(2+) site is built by cysteine 132 and cysteine 135. Substrate is bound at residue tyrosine 140. Positions 141–265 (PRLSPSMIVL…IARHLIDLYL (125 aa)) constitute a Nudix hydrolase domain. The a divalent metal cation site is built by alanine 174, glutamate 190, and glutamate 194. The Nudix box motif lies at 175 to 196 (GFVEAGESVEQCVVREVREEVG). Substrate is bound at residue 208–215 (QNWPFPHS). Glutamate 235 lines the a divalent metal cation pocket. Alanine 257 provides a ligand contact to substrate.

It belongs to the Nudix hydrolase family. NudC subfamily. As to quaternary structure, homodimer. Mg(2+) is required as a cofactor. Requires Mn(2+) as cofactor. Zn(2+) serves as cofactor.

It carries out the reaction a 5'-end NAD(+)-phospho-ribonucleoside in mRNA + H2O = a 5'-end phospho-adenosine-phospho-ribonucleoside in mRNA + beta-nicotinamide D-ribonucleotide + 2 H(+). It catalyses the reaction NAD(+) + H2O = beta-nicotinamide D-ribonucleotide + AMP + 2 H(+). The enzyme catalyses NADH + H2O = reduced beta-nicotinamide D-ribonucleotide + AMP + 2 H(+). MRNA decapping enzyme that specifically removes the nicotinamide adenine dinucleotide (NAD) cap from a subset of mRNAs by hydrolyzing the diphosphate linkage to produce nicotinamide mononucleotide (NMN) and 5' monophosphate mRNA. The NAD-cap is present at the 5'-end of some mRNAs and stabilizes RNA against 5'-processing. Has preference for mRNAs with a 5'-end purine. Catalyzes the hydrolysis of a broad range of dinucleotide pyrophosphates. The polypeptide is NAD-capped RNA hydrolase NudC (Pseudomonas aeruginosa (strain LESB58)).